The chain runs to 293 residues: Probable 2-(5''-triphosphoribosyl)-3'-dephosphocoenzyme-A synthase (293 aa).

Belongs to the CitG/MdcB family.

The enzyme catalyses 3'-dephospho-CoA + ATP = 2'-(5''-triphospho-alpha-D-ribosyl)-3'-dephospho-CoA + adenine. Its function is as follows. Involved in the formation of 2-(5''-phosphoribosyl)-3'-dephosphocoenzyme-A, the prosthetic group of the acyl-carrier protein of the malonate decarboxylase. The sequence is that of Probable 2-(5''-triphosphoribosyl)-3'-dephosphocoenzyme-A synthase from Pseudomonas aeruginosa (strain ATCC 15692 / DSM 22644 / CIP 104116 / JCM 14847 / LMG 12228 / 1C / PRS 101 / PAO1).